Consider the following 461-residue polypeptide: General transcription and DNA repair factor IIH subunit SSL1 (461 aa).

Positions 1–70 (MAPVVISESE…RLSNRNLQGS (70 aa)) are disordered. Residues 26–37 (VHFDGEGDDRVD) show a composition bias toward basic and acidic residues. A compositionally biased stretch (basic residues) spans 53–63 (HVQRKKKKRLS). The VWFA domain maps to 125–304 (SLILTLDCSE…THLKELFNEA (180 aa)). A C4-type zinc finger spans residues 349–366 (CPNCHSKVCSLPTVCPCC).

The protein belongs to the GTF2H2 family. As to quaternary structure, component of the 7-subunit TFIIH core complex composed of XPB/SSL2, XPD/RAD3, SSL1, TFB1, TFB2, TFB4 and TFB5, which is active in NER. The core complex associates with the 3-subunit CTD-kinase module TFIIK composed of CCL1, KIN28 and TFB3 to form the 10-subunit holoenzyme (holo-TFIIH) active in transcription. An additionnal subunit, TFB6, plays a role in the dissociation of the SSL2 helicase from TFIIH after transcription initiation.

It is found in the nucleus. Its function is as follows. Component of the general transcription and DNA repair factor IIH (TFIIH) core complex, which is involved in general and transcription-coupled nucleotide excision repair (NER) of damaged DNA and, when complexed to TFIIK, in RNA transcription by RNA polymerase II. In NER, TFIIH acts by opening DNA around the lesion to allow the excision of the damaged oligonucleotide and its replacement by a new DNA fragment. In transcription, TFIIH has an essential role in transcription initiation. When the pre-initiation complex (PIC) has been established, TFIIH is required for promoter opening and promoter escape. Phosphorylation of the C-terminal tail (CTD) of the largest subunit of RNA polymerase II by the kinase module TFIIK controls the initiation of transcription. This chain is General transcription and DNA repair factor IIH subunit SSL1 (SSL1), found in Saccharomyces cerevisiae (strain ATCC 204508 / S288c) (Baker's yeast).